Consider the following 341-residue polypeptide: 4-hydroxythreonine-4-phosphate dehydrogenase (341 aa).

Thr126 is a substrate binding site. A divalent metal cation contacts are provided by His161, His206, and His272. Lys280, Asn289, and Arg298 together coordinate substrate.

This sequence belongs to the PdxA family. As to quaternary structure, homodimer. A divalent metal cation is required as a cofactor.

The protein resides in the cytoplasm. It carries out the reaction 4-(phosphooxy)-L-threonine + NAD(+) = 3-amino-2-oxopropyl phosphate + CO2 + NADH. Its pathway is cofactor biosynthesis; pyridoxine 5'-phosphate biosynthesis; pyridoxine 5'-phosphate from D-erythrose 4-phosphate: step 4/5. Catalyzes the NAD(P)-dependent oxidation of 4-(phosphooxy)-L-threonine (HTP) into 2-amino-3-oxo-4-(phosphooxy)butyric acid which spontaneously decarboxylates to form 3-amino-2-oxopropyl phosphate (AHAP). This is 4-hydroxythreonine-4-phosphate dehydrogenase from Thermosynechococcus vestitus (strain NIES-2133 / IAM M-273 / BP-1).